A 294-amino-acid chain; its full sequence is Lipoprotein NlpI (294 aa).

Positions 1–18 (MKPFLRWCFVATALTLAG) are cleaved as a signal peptide. The N-palmitoyl cysteine moiety is linked to residue cysteine 19. The S-diacylglycerol cysteine moiety is linked to residue cysteine 19. TPR repeat units lie at residues 62 to 95 (AQLL…RPDM), 96 to 129 (PEVF…DPTY), and 234 to 267 (SETN…NVHN).

In terms of assembly, homodimer.

Its subcellular location is the cell membrane. In terms of biological role, may be involved in cell division. May play a role in bacterial septation or regulation of cell wall degradation during cell division. In Escherichia coli O157:H7, this protein is Lipoprotein NlpI (nlpI).